The primary structure comprises 676 residues: Envelope glycoprotein (676 aa).

The N-terminal stretch at 1–32 (MGASGILQLPRERFRKTSFFVWVIILFHKVFS) is a signal peptide. Topologically, residues 33-650 (IPLGVVHNNT…GSNWWTGWKQ (618 aa)) are extracellular. N-linked (GlcNAc...) asparagine; by host glycosylation is present at Asn40. 5 disulfide bridges follow: Cys53–Cys609, Cys108–Cys135, Cys121–Cys147, Cys511–Cys556, and Cys601–Cys608. The interval 54–201 (RDKLSSTSQL…DFFQSPPLHE (148 aa)) is receptor-binding. 5 N-linked (GlcNAc...) asparagine; by host glycosylation sites follow: Asn204, Asn228, Asn257, Asn268, and Asn296. Positions 305–485 (ELSFVPVPET…LSGPGFLTNT (181 aa)) are mucin-like region. Residues 356–463 (IKGKDTMPTT…PTTLPEQHTA (108 aa)) form a disordered region. Over residues 361–374 (TMPTTVTGVPTTTP) the composition is skewed to low complexity. Residues 402 to 422 (TTQPAKTTSQPTNSTESTTLN) are compositionally biased toward polar residues. Asn414 carries an N-linked (GlcNAc...) asparagine; by host glycan. Over residues 423–440 (PTSEPSSRGTGPSSPTVP) the composition is skewed to low complexity. A glycan (N-linked (GlcNAc...) asparagine; by host) is linked at Asn441. Residues 452–463 (TTPTTLPEQHTA) are compositionally biased toward polar residues. Residues 524 to 539 (GAAIGLAWIPYFGPAA) are fusion peptide. Residues 554 to 595 (LICGLRQLANETTQALQLFLRATTELRTFSILNRKAIDFLLQ) adopt a coiled-coil conformation. Asn563 carries an N-linked (GlcNAc...) asparagine; by host glycan. Positions 615 to 634 (WTKNITDKIDQIIHDFVDNN) form a coiled coil. N-linked (GlcNAc...) asparagine; by host glycosylation is present at Asn618. Residues 651–671 (WVPAGIGITGVIIAIIALLCI) traverse the membrane as a helical segment. 2 S-palmitoyl cysteine; by host lipidation sites follow: Cys670 and Cys672. Residues 672-676 (CKFML) lie on the Cytoplasmic side of the membrane.

It belongs to the filoviruses glycoprotein family. Homotrimer; each monomer consists of a GP1 and a GP2 subunit linked by disulfide bonds. The resulting peplomers (GP1,2) protrude from the virus surface as spikes. GP1 and GP2delta are part of GP1,2delta soluble complexes released by ectodomain shedding. GP1,2 interacts with host integrin ITGAV/alpha-V and CLEC10A. Also binds human CD209 and CLEC4M (collectively referred to as DC-SIGN(R)), as well as human FOLR1. Interacts with host entry receptor NPC1. The signal peptide region modulates GP's high mannose glycosylation, thereby determining the efficiency of the interactions with DC-SIGN(R). Post-translationally, N-glycosylated. In terms of processing, O-glycosylated in the mucin-like region. Palmitoylation of GP2 is not required for its function. Post-translationally, specific enzymatic cleavages in vivo yield mature proteins. The precursor is processed into GP1 and GP2 by host cell furin in the trans Golgi, and maybe by other host proteases, to yield the mature GP1 and GP2 proteins. The cleavage site corresponds to the furin optimal cleavage sequence [KR]-X-[KR]-R. This cleavage does not seem to be required for function. After the internalization of the virus into cell endosomes, GP1 C-terminus is removed by the endosomal proteases cathepsin B, cathepsin L, or both, leaving a 19-kDa N-terminal fragment which is further digested by cathepsin B. Proteolytic processing of GP1,2 by host ADAM17 can remove the transmembrane anchor of GP2 and leads to shedding of complexes consisting in GP1 and truncated GP2 (GP1,2delta).

Its subcellular location is the virion membrane. It is found in the host cell membrane. The protein localises to the secreted. In terms of biological role, GP1 is responsible for binding to the receptor(s) on target cells. Interacts with CD209/DC-SIGN and CLEC4M/DC-SIGNR which act as cofactors for virus entry into the host cell. Binding to CD209 and CLEC4M, which are respectively found on dendritic cells (DCs), and on endothelial cells of liver sinusoids and lymph node sinuses, facilitate infection of macrophages and endothelial cells. These interactions not only facilitate virus cell entry, but also allow capture of viral particles by DCs and subsequent transmission to susceptible cells without DCs infection (trans infection). Binding to the macrophage specific lectin CLEC10A also seems to enhance virus infectivity. Interaction with FOLR1/folate receptor alpha may be a cofactor for virus entry in some cell types, although results are contradictory. Members of the Tyro3 receptor tyrosine kinase family also seem to be cell entry factors in filovirus infection. Once attached, the virions are internalized through clathrin-dependent endocytosis and/or macropinocytosis. After internalization of the virus into the endosomes of the host cell, proteolysis of GP1 by two cysteine proteases, CTSB/cathepsin B and CTSL/cathepsin L presumably induces a conformational change of GP2, unmasking its fusion peptide and initiating membranes fusion. GP2 acts as a class I viral fusion protein. Under the current model, the protein has at least 3 conformational states: pre-fusion native state, pre-hairpin intermediate state, and post-fusion hairpin state. During viral and target cell membrane fusion, the coiled coil regions (heptad repeats) assume a trimer-of-hairpins structure, positioning the fusion peptide in close proximity to the C-terminal region of the ectodomain. The formation of this structure appears to drive apposition and subsequent fusion of viral and target cell membranes. Responsible for penetration of the virus into the cell cytoplasm by mediating the fusion of the membrane of the endocytosed virus particle with the endosomal membrane. Low pH in endosomes induces an irreversible conformational change in GP2, releasing the fusion hydrophobic peptide. Its function is as follows. GP1,2 which is the disulfid-linked complex of GP1 and GP2, mediates endothelial cell activation and decreases endothelial barrier function. Mediates activation of primary macrophages. At terminal stages of the viral infection, when its expression is high, GP1,2 down-modulates the expression of various host cell surface molecules that are essential for immune surveillance and cell adhesion. Down-modulates integrins ITGA1, ITGA2, ITGA3, ITGA4, ITGA5, ITGA6, ITGAV and ITGB1. GP1,2 alters the cellular recycling of the dimer alpha-V/beta-3 via a dynamin-dependent pathway. Decrease in the host cell surface expression of various adhesion molecules may lead to cell detachment, contributing to the disruption of blood vessel integrity and hemorrhages developed during Ebola virus infection (cytotoxicity). This cytotoxicity appears late in the infection, only after the massive release of viral particles by infected cells. Down-modulation of host MHC-I, leading to altered recognition by immune cells, may explain the immune suppression and inflammatory dysfunction linked to Ebola infection. Also down-modulates EGFR surface expression. Counteracts the antiviral effect of host tetherin. Functionally, GP2delta is part of the complex GP1,2delta released by host ADAM17 metalloprotease. This secreted complex may play a role in the pathogenesis of the virus by efficiently blocking the neutralizing antibodies that would otherwise neutralize the virus surface glycoproteins GP1,2. Might therefore contribute to the lack of inflammatory reaction seen during infection in spite the of extensive necrosis and massive virus production. GP1,2delta does not seem to be involved in activation of primary macrophages. This Tai Forest ebolavirus (strain Cote d'Ivoire-94) (TAFV) protein is Envelope glycoprotein (GP).